Reading from the N-terminus, the 248-residue chain is NADP-dependent 3-hydroxy acid dehydrogenase YdfG (248 aa).

Residues 7–12 (GATAGF), 32–33 (RR), 54–55 (DV), and asparagine 81 each bind NADP(+). Serine 134 provides a ligand contact to substrate. NADP(+)-binding positions include tyrosine 147, lysine 151, and 177–185 (PGLVGGTEF). Residue tyrosine 147 is the Proton acceptor of the active site.

The protein belongs to the short-chain dehydrogenases/reductases (SDR) family. In terms of assembly, homotetramer.

The enzyme catalyses 3-hydroxypropanoate + NADP(+) = 3-oxopropanoate + NADPH + H(+). It carries out the reaction L-allo-threonine + NADP(+) = aminoacetone + CO2 + NADPH. NADP-dependent dehydrogenase with broad substrate specificity acting on 3-hydroxy acids. Catalyzes the NADP-dependent oxidation of L-allo-threonine to L-2-amino-3-keto-butyrate, which is spontaneously decarboxylated into aminoacetone. Also acts on D-threonine, L-serine, D-serine, D-3-hydroxyisobutyrate, L-3-hydroxyisobutyrate, D-glycerate and L-glycerate. Able to catalyze the reduction of the malonic semialdehyde to 3-hydroxypropionic acid. YdfG is apparently supplementing RutE, the presumed malonic semialdehyde reductase involved in pyrimidine degradation since both are able to detoxify malonic semialdehyde. The sequence is that of NADP-dependent 3-hydroxy acid dehydrogenase YdfG from Salmonella typhi.